The chain runs to 545 residues: CTP synthase (545 aa).

The segment at 1–266 (MTTRYIFVTG…DELVIKRFNI (266 aa)) is amidoligase domain. Residue Ser14 participates in CTP binding. Ser14 is a binding site for UTP. Residues 15–20 (SLGKGI) and Asp72 contribute to the ATP site. Positions 72 and 140 each coordinate Mg(2+). Residues 147-149 (DIE), 187-192 (KTKPTQ), and Lys223 contribute to the CTP site. UTP-binding positions include 187–192 (KTKPTQ) and Lys223. 239-241 (KDV) provides a ligand contact to ATP. Residues 291–542 (TIGMVGKYIE…IAASLSHQKR (252 aa)) enclose the Glutamine amidotransferase type-1 domain. Gly352 is a binding site for L-glutamine. The active-site Nucleophile; for glutamine hydrolysis is Cys379. L-glutamine-binding positions include 380 to 383 (LGMQ), Glu403, and Arg470. Residues His515 and Glu517 contribute to the active site.

It belongs to the CTP synthase family. In terms of assembly, homotetramer.

The enzyme catalyses UTP + L-glutamine + ATP + H2O = CTP + L-glutamate + ADP + phosphate + 2 H(+). The catalysed reaction is L-glutamine + H2O = L-glutamate + NH4(+). It catalyses the reaction UTP + NH4(+) + ATP = CTP + ADP + phosphate + 2 H(+). It participates in pyrimidine metabolism; CTP biosynthesis via de novo pathway; CTP from UDP: step 2/2. Its activity is regulated as follows. Allosterically activated by GTP, when glutamine is the substrate; GTP has no effect on the reaction when ammonia is the substrate. The allosteric effector GTP functions by stabilizing the protein conformation that binds the tetrahedral intermediate(s) formed during glutamine hydrolysis. Inhibited by the product CTP, via allosteric rather than competitive inhibition. Functionally, catalyzes the ATP-dependent amination of UTP to CTP with either L-glutamine or ammonia as the source of nitrogen. Regulates intracellular CTP levels through interactions with the four ribonucleotide triphosphates. The chain is CTP synthase from Shewanella denitrificans (strain OS217 / ATCC BAA-1090 / DSM 15013).